We begin with the raw amino-acid sequence, 514 residues long: Respiratory nitrate reductase 2 beta chain (514 aa).

4Fe-4S ferredoxin-type domains lie at 7–35, 174–205, and 207–236; these read VGMV…GREG, TFMM…KREE, and GIVL…FNWK. [4Fe-4S] cluster-binding residues include C16, C19, C22, C26, C183, C186, and C191. [3Fe-4S] cluster contacts are provided by C195, C216, and C222. Residues C226, C243, C246, C258, and C262 each contribute to the [4Fe-4S] cluster site.

As to quaternary structure, dimer of heterotrimers each composed of an alpha, a beta and a gamma chain. Alpha and beta are catalytic chains; gamma chains are involved in binding the enzyme complex to the cytoplasmic membrane. Requires [4Fe-4S] cluster as cofactor. [3Fe-4S] cluster is required as a cofactor.

Its subcellular location is the cell membrane. The catalysed reaction is nitrate + a quinol = a quinone + nitrite + H2O. Functionally, this is a second nitrate reductase enzyme which can substitute for the NRA enzyme and allows E.coli to use nitrate as an electron acceptor during anaerobic growth. The beta chain is an electron transfer unit containing four cysteine clusters involved in the formation of iron-sulfur centers. Electrons are transferred from the gamma chain to the molybdenum cofactor of the alpha subunit. The protein is Respiratory nitrate reductase 2 beta chain (narY) of Escherichia coli (strain K12).